The following is a 337-amino-acid chain: Hsp90 co-chaperone Cdc37-like 1 (337 aa).

Positions 1-11 are enriched in pro residues; that stretch reads MEQPWPPPGPW. The segment at 1 to 40 is disordered; that stretch reads MEQPWPPPGPWSLPRAEGEAEEESDFDVFPSSPRCPQLPG. The interval 2 to 171 is self-association; it reads EQPWPPPGPW…YEQKIRHFGM (170 aa). A phosphoserine mark is found at Ser32 and Ser88. Residues 84-122 adopt a coiled-coil conformation; it reads HNSESLDQEHAKAQTAVSELRQREEEWRQKEEALVQREK. The interval 147 to 277 is self-association and interaction with Hsp90; sequence KDTEDEDKSE…SRVRLYSQSQ (131 aa). The tract at residues 267 to 337 is interaction with Hsp70; that stretch reads KSRVRLYSQS…DDEPKMMDTV (71 aa). A required for interaction with STIP1 region spans residues 278–337; it reads SFQPMTVQNHVPHSGVGSIGLLESLPQNPDYLQYSISTALCSLNSVVHKEDDEPKMMDTV.

The protein belongs to the CDC37 family. Self-associates. Forms complexes with Hsp70 and Hsp90. Interacts with CDC37, FKBP4, PPID and STIP1. As to expression, expressed in brain, heart, kidney, liver, placenta and skeletal muscle.

Its subcellular location is the cytoplasm. Functionally, co-chaperone that binds to numerous proteins and promotes their interaction with Hsp70 and Hsp90. The polypeptide is Hsp90 co-chaperone Cdc37-like 1 (CDC37L1) (Homo sapiens (Human)).